Here is a 1925-residue protein sequence, read N- to C-terminus: Plexin-D1 (1925 aa).

Positions 1–21 (MARRAAGGAPPSARAAAAVPL) are enriched in low complexity. A disordered region spans residues 1 to 26 (MARRAAGGAPPSARAAAAVPLRPRPH). An N-terminal signal peptide occupies residues 1–48 (MARRAAGGAPPSARAAAAVPLRPRPHSRGPGLLPLPLLLLLGAARAGA). The region spanning 49 to 548 (LEIQRRFPSP…TSHQMARVKV (500 aa)) is the Sema domain. The Extracellular segment spans residues 49-1271 (LEIQRRFPSP…TLQLGGSETA (1223 aa)). Disulfide bonds link Cys106–Cys116 and Cys142–Cys150. N-linked (GlcNAc...) asparagine glycans are attached at residues Asn157 and Asn226. Cystine bridges form between Cys324/Cys447 and Cys347/Cys391. Asn483 carries N-linked (GlcNAc...) asparagine glycosylation. Disulfide bonds link Cys551–Cys568, Cys557–Cys602, Cys560–Cys577, Cys571–Cys583, and Cys639–Cys663. IPT/TIG domains lie at 893–977 (PEIR…SREQ), 983–1065 (PTVH…NLTF), and 1071–1145 (PVIT…FING). The N-linked (GlcNAc...) asparagine glycan is linked to Asn967. N-linked (GlcNAc...) asparagine glycosylation occurs at Asn1120. Residues 1272–1292 (IVVSIVICSVLLLLSVVALFV) form a helical membrane-spanning segment. Over 1293-1925 (FCTKSRRAER…NNIYECYSEA (633 aa)) the chain is Cytoplasmic.

Belongs to the plexin family. In terms of assembly, interacts with NRP1 and SEMA4A. Interacts with SH3BP1; they dissociate upon SEMA3E binding to PLXND1 allowing SH3BP1 to transduce downstream signal through RAC1 inactivation. In terms of tissue distribution, detected in embryonic heart and vascular endothelium, brain, dorsal root ganglia, adrenal gland, lung mesenchyme, small intestine and in the ossification centers of vertebral bodies.

The protein resides in the cell membrane. It localises to the cell projection. Its subcellular location is the lamellipodium membrane. Its function is as follows. Cell surface receptor for SEMA4A and for class 3 semaphorins, such as SEMA3A, SEMA3C and SEMA3E. Plays an important role in cell-cell signaling, and in regulating the migration of a wide spectrum of cell types. Regulates the migration of thymocytes in the medulla. Regulates endothelial cell migration. Plays an important role in ensuring the specificity of synapse formation. Mediates anti-angiogenic signaling in response to SEMA3E. Required for normal development of the heart and vasculature. The chain is Plexin-D1 (Plxnd1) from Mus musculus (Mouse).